We begin with the raw amino-acid sequence, 550 residues long: Mitochondrial distribution and morphology protein 34 (550 aa).

The region spanning 1 to 208 (MAFNFNWSPL…CPEQMSKEDH (208 aa)) is the SMP-LTD domain. Disordered stretches follow at residues 294–313 (VDKP…LVKS), 358–505 (RNAK…ILEQ), and 519–550 (VYDE…TAAS). Residues 300–310 (SSTTPLTTPSL) are compositionally biased toward low complexity. A compositionally biased stretch (basic residues) spans 364–376 (ANRKKKTRVVNLR). 2 stretches are compositionally biased toward polar residues: residues 391 to 407 (MSDS…TMSD) and 458 to 467 (AEISQPQVAR). The segment covering 481–495 (SENDKRSDSKRRGPR) has biased composition (basic and acidic residues).

Belongs to the MDM34 family. Component of the ER-mitochondria encounter structure (ERMES) or MDM complex, composed of MMM1, MDM10, MDM12 and MDM34.

It is found in the mitochondrion outer membrane. Its function is as follows. Component of the ERMES/MDM complex, which serves as a molecular tether to connect the endoplasmic reticulum (ER) and mitochondria. Components of this complex are involved in the control of mitochondrial shape and protein biogenesis, and function in nonvesicular lipid trafficking between the ER and mitochondria. MDM34 is required for the interaction of the ER-resident membrane protein MMM1 and the outer mitochondrial membrane-resident beta-barrel protein MDM10. The protein is Mitochondrial distribution and morphology protein 34 of Pyricularia oryzae (strain 70-15 / ATCC MYA-4617 / FGSC 8958) (Rice blast fungus).